We begin with the raw amino-acid sequence, 40 residues long: Peroxisomal LYS1 stabilizing protein 1 (40 aa).

The segment covering 1–10 (MTAKTKQSWN) has biased composition (polar residues). Residues 1 to 20 (MTAKTKQSWNKGIWENGKQG) form a disordered region.

The protein localises to the cytoplasm. It is found in the cytosol. It localises to the peroxisome matrix. Functionally, modulates the lysine biosynthesis pathway, possibly by stabilizing the lysine biosynthesis LYS1 protein in lysine-deplete conditions. This is Peroxisomal LYS1 stabilizing protein 1 from Saccharomyces cerevisiae (strain ATCC 204508 / S288c) (Baker's yeast).